Consider the following 189-residue polypeptide: Small ribosomal subunit protein uS7 (189 aa).

Belongs to the universal ribosomal protein uS7 family. Part of the 30S ribosomal subunit.

Functionally, one of the primary rRNA binding proteins, it binds directly to 16S rRNA where it nucleates assembly of the head domain of the 30S subunit. Is located at the subunit interface close to the decoding center. In Methanosarcina acetivorans (strain ATCC 35395 / DSM 2834 / JCM 12185 / C2A), this protein is Small ribosomal subunit protein uS7.